Reading from the N-terminus, the 75-residue chain is UPF0352 protein VF_1649 (75 aa).

The protein belongs to the UPF0352 family.

The sequence is that of UPF0352 protein VF_1649 from Aliivibrio fischeri (strain ATCC 700601 / ES114) (Vibrio fischeri).